Consider the following 210-residue polypeptide: Proteasome subunit beta (210 aa).

The propeptide at 1–9 is removed in mature form; by autocatalysis; it reads MIHDKVFKG. T10 (nucleophile) is an active-site residue.

Belongs to the peptidase T1B family. The 20S proteasome core is composed of 14 alpha and 14 beta subunits that assemble into four stacked heptameric rings, resulting in a barrel-shaped structure. The two inner rings, each composed of seven catalytic beta subunits, are sandwiched by two outer rings, each composed of seven alpha subunits. The catalytic chamber with the active sites is on the inside of the barrel. Has a gated structure, the ends of the cylinder being occluded by the N-termini of the alpha-subunits. Is capped at one or both ends by the proteasome regulatory ATPase, PAN.

The protein resides in the cytoplasm. The enzyme catalyses Cleavage of peptide bonds with very broad specificity.. The formation of the proteasomal ATPase PAN-20S proteasome complex, via the docking of the C-termini of PAN into the intersubunit pockets in the alpha-rings, triggers opening of the gate for substrate entry. Interconversion between the open-gate and close-gate conformations leads to a dynamic regulation of the 20S proteasome proteolysis activity. Functionally, component of the proteasome core, a large protease complex with broad specificity involved in protein degradation. The chain is Proteasome subunit beta from Ferroglobus placidus (strain DSM 10642 / AEDII12DO).